The primary structure comprises 305 residues: Transmembrane protein 74 (305 aa).

Disordered stretches follow at residues 52 to 88 (ATEM…LLHS) and 123 to 143 (RNRS…GWEN). Positions 58-78 (SKLSSSPASPSSSLQNSTLQP) are enriched in low complexity. The next 2 helical transmembrane spans lie at 178–198 (FISA…SYIV) and 232–252 (VIAG…LLMM).

Belongs to the TMEM74 family. As to expression, expressed in heart, lung, and placenta.

The protein localises to the lysosome membrane. The protein resides in the cytoplasmic vesicle. Its subcellular location is the autophagosome membrane. In terms of biological role, plays an essential role in autophagy. TMEM74-induced autophagy may involve PI3K signal transduction. The sequence is that of Transmembrane protein 74 (TMEM74) from Homo sapiens (Human).